The following is a 1225-amino-acid chain: DNA-directed RNA polymerase subunit beta' (1225 aa).

The Zn(2+) site is built by C60, C62, C75, and C78. Mg(2+) is bound by residues D450, D452, and D454. The Zn(2+) site is built by C818, C892, C899, and C902.

The protein belongs to the RNA polymerase beta' chain family. As to quaternary structure, the RNAP catalytic core consists of 2 alpha, 1 beta, 1 beta' and 1 omega subunit. When a sigma factor is associated with the core the holoenzyme is formed, which can initiate transcription. The cofactor is Mg(2+). Requires Zn(2+) as cofactor.

It catalyses the reaction RNA(n) + a ribonucleoside 5'-triphosphate = RNA(n+1) + diphosphate. In terms of biological role, DNA-dependent RNA polymerase catalyzes the transcription of DNA into RNA using the four ribonucleoside triphosphates as substrates. This is DNA-directed RNA polymerase subunit beta' from Streptococcus pneumoniae (strain P1031).